The sequence spans 274 residues: MNKEFIKSIVVSSPWEKVEIARHKDRPTGKYYIDNIFKDFIEFHGDRLFGDDKAVIGGIASFEDISVTVIAITKGANTNENIERNFGMPNPEGYRKALRLMKQAEKFNRPVICFIDTPGAFCGVGAEERGQGSAIANNLFELSRLKTPIISIVIGEGGSGGALALTVADKILMLENAVYSILSPEGFASILWKDSKRVKEAANVMKITAQDLNEFGIIDTVIKEPRGGAHKNPQKQVTLIKKELMNAMNEMKNIETNQMINERYDKFRKIGTLE.

The region spanning 2 to 250 (NKEFIKSIVV…KKELMNAMNE (249 aa)) is the CoA carboxyltransferase C-terminal domain.

This sequence belongs to the AccA family. Acetyl-CoA carboxylase is a heterohexamer composed of biotin carboxyl carrier protein (AccB), biotin carboxylase (AccC) and two subunits each of ACCase subunit alpha (AccA) and ACCase subunit beta (AccD).

It is found in the cytoplasm. The catalysed reaction is N(6)-carboxybiotinyl-L-lysyl-[protein] + acetyl-CoA = N(6)-biotinyl-L-lysyl-[protein] + malonyl-CoA. It functions in the pathway lipid metabolism; malonyl-CoA biosynthesis; malonyl-CoA from acetyl-CoA: step 1/1. Its function is as follows. Component of the acetyl coenzyme A carboxylase (ACC) complex. First, biotin carboxylase catalyzes the carboxylation of biotin on its carrier protein (BCCP) and then the CO(2) group is transferred by the carboxyltransferase to acetyl-CoA to form malonyl-CoA. The sequence is that of Acetyl-coenzyme A carboxylase carboxyl transferase subunit alpha from Clostridium botulinum (strain Eklund 17B / Type B).